The following is a 103-amino-acid chain: Large ribosomal subunit protein bL21 (103 aa).

Belongs to the bacterial ribosomal protein bL21 family. In terms of assembly, part of the 50S ribosomal subunit. Contacts protein L20.

This protein binds to 23S rRNA in the presence of protein L20. The chain is Large ribosomal subunit protein bL21 from Vibrio atlanticus (strain LGP32) (Vibrio splendidus (strain Mel32)).